The chain runs to 359 residues: Protein RecA (359 aa).

77–84 (GPESSGKT) is an ATP binding site.

The protein belongs to the RecA family.

Its subcellular location is the cytoplasm. Can catalyze the hydrolysis of ATP in the presence of single-stranded DNA, the ATP-dependent uptake of single-stranded DNA by duplex DNA, and the ATP-dependent hybridization of homologous single-stranded DNAs. It interacts with LexA causing its activation and leading to its autocatalytic cleavage. The polypeptide is Protein RecA (Azospirillum lipoferum (strain 4B)).